Consider the following 181-residue polypeptide: Mating-type M-specific polypeptide Mc (181 aa).

Positions 103 to 171 (TPRPPNAFIL…QHQKMYPGYK (69 aa)) form a DNA-binding region, HMG box.

It is found in the nucleus. In terms of biological role, mating type proteins are sequence specific DNA-binding proteins that act as master switches in yeast differentiation by controlling gene expression in a cell type-specific fashion. Positive regulator of MFM genes. The HMG box recognizes the DNA sequence 5'-AACAAAG-3'. Required for conjugation and efficient meiosis. The protein is Mating-type M-specific polypeptide Mc (matMc) of Schizosaccharomyces kambucha (Fission yeast).